A 286-amino-acid polypeptide reads, in one-letter code: Mycolic acid methyltransferase MmaA1 (286 aa).

Residues 32–33 (YT), 71–73 (GCG), 93–98 (TLSRNH), and 122–123 (WE) each bind S-adenosyl-L-methionine. C268 is an active-site residue.

Belongs to the CFA/CMAS family.

Its pathway is lipid metabolism; mycolic acid biosynthesis. Its function is as follows. Involved in the conversion of a cis-olefin into a trans-olefin with concomitant introduction of an allylic methyl branch at the proximal position of the precursor to both the methoxy and ketomycolic acids. It directly affects the cis- to trans ratio and indirectly affects the keto to methoxy ratio. The polypeptide is Mycolic acid methyltransferase MmaA1 (cmaD) (Mycobacterium bovis (strain ATCC BAA-935 / AF2122/97)).